We begin with the raw amino-acid sequence, 479 residues long: (R)-1-hydroxy-2-aminoethylphosphonate ammonia-lyase (479 aa).

Lys-317 bears the N6-(pyridoxal phosphate)lysine mark.

Belongs to the class-III pyridoxal-phosphate-dependent aminotransferase family. The cofactor is pyridoxal 5'-phosphate.

It catalyses the reaction (1R)-(2-amino-1-hydroxyethyl)phosphonate = phosphonoacetaldehyde + NH4(+). Its function is as follows. Involved in phosphonate degradation. Functions as a lyase that catalyzes an elimination reaction on the naturally occurring compound (R)-1-hydroxy-2-aminoethylphosphonate ((R)-HAEP), releasing ammonia and generating phosphonoacetaldehyde (PAA), which can be then hydrolyzed by PhnX, encoded by an adjacent gene. Thus, catalyzes a reaction that serves to funnel (R)-HAEP into the hydrolytic pathway for aminoethylphosphonate (AEP, the most common biogenic phosphonate) degradation, expanding the scope and the usefulness of the pathway itself. Is not active toward the (S) enantiomer of HAEP or other HAEP-related compounds such as ethanolamine and D,L-isoserine, indicating a very high substrate specificity. The polypeptide is (R)-1-hydroxy-2-aminoethylphosphonate ammonia-lyase (Vibrio splendidus (strain 12B01)).